Reading from the N-terminus, the 430-residue chain is Probable acetate kinase (430 aa).

Asn12 lines the Mg(2+) pocket. Residue Lys19 participates in ATP binding. A substrate-binding site is contributed by Arg100. Asp159 functions as the Proton donor/acceptor in the catalytic mechanism. 220-224 (HLGSG) lines the ATP pocket. Glu416 is a Mg(2+) binding site.

It belongs to the acetokinase family. Requires Mg(2+) as cofactor.

The catalysed reaction is acetate + ATP = acetyl phosphate + ADP. The protein operates within metabolic intermediate biosynthesis; acetyl-CoA biosynthesis; acetyl-CoA from acetate: step 1/2. In Cryptococcus neoformans var. neoformans serotype D (strain B-3501A) (Filobasidiella neoformans), this protein is Probable acetate kinase.